The following is a 469-amino-acid chain: MNPNQKTITIGSVSLTIATVCFLMQIAILATTVTLHFKQHECDSPASNQVMPCEPIIIERNITEIVYLNNTTIEKEICPEVVEYRNWSKPQCQITGFAPFSKDNSIRLSAGGDIWVTREPYVSCDPGKCYQFALGQGTTLDNKHSNGTIHDRIPHRTLLMNELGVPFHLGTKQVCVAWSSSSCHDGKAWLHVCVTGDDRNATASFIYDGRLVDSIGSWSQNILRTQESECVCINGTCTVVMTDGSASGRADTRILFIKEGKIVHISPLSGSAQHIEECSCYPRYPDVRCICRDNWKGSNRPVIDINMEDYSIDSSYVCSGLVGDTPRNDDSSSNSNCRDPNNERGNPGVKGWAFDNGDDVWMGRTINKESRSGYETFKVIGGWSTPNSKSQVNRQVIVDNNNWSGYSGIFSVEGKSCINRCFYVELIRGRPQETRVWWTSNSIVVFCGTSGTYGTGSWPDGANINFMPI.

Residues 1-6 (MNPNQK) lie on the Intravirion side of the membrane. Residues 7–29 (TITIGSVSLTIATVCFLMQIAIL) form a helical membrane-spanning segment. Residues 11–33 (GSVSLTIATVCFLMQIAILATTV) form an involved in apical transport and lipid raft association region. Residues 30–469 (ATTVTLHFKQ…DGANINFMPI (440 aa)) lie on the Virion surface side of the membrane. The segment at 36 to 88 (HFKQHECDSPASNQVMPCEPIIIERNITEIVYLNNTTIEKEICPEVVEYRNWS) is hypervariable stalk region. Residues Asn61, Asn69, Asn70, and Asn86 are each glycosylated (N-linked (GlcNAc...) asparagine; by host). Residues 91 to 469 (QCQITGFAPF…DGANINFMPI (379 aa)) form a head of neuraminidase region. Disulfide bonds link Cys92–Cys417, Cys124–Cys129, Cys183–Cys230, Cys232–Cys237, Cys278–Cys291, Cys280–Cys289, Cys318–Cys337, and Cys421–Cys447. Substrate is bound at residue Arg118. N-linked (GlcNAc...) asparagine; by host glycosylation occurs at Asn146. Residue Asp151 is the Proton donor/acceptor of the active site. Arg152 contributes to the substrate binding site. 2 N-linked (GlcNAc...) asparagine; by host glycosylation sites follow: Asn200 and Asn234. 276–277 (EE) contributes to the substrate binding site. Arg292 is a binding site for substrate. Asp293, Gly297, and Asp324 together coordinate Ca(2+). Positions 325–349 (TPRNDDSSSNSNCRDPNNERGNPGV) are disordered. Residue Arg371 coordinates substrate. The N-linked (GlcNAc...) asparagine; by host glycan is linked to Asn402. Tyr406 serves as the catalytic Nucleophile.

The protein belongs to the glycosyl hydrolase 34 family. In terms of assembly, homotetramer. The cofactor is Ca(2+). Post-translationally, N-glycosylated.

It localises to the virion membrane. The protein resides in the host apical cell membrane. The catalysed reaction is Hydrolysis of alpha-(2-&gt;3)-, alpha-(2-&gt;6)-, alpha-(2-&gt;8)- glycosidic linkages of terminal sialic acid residues in oligosaccharides, glycoproteins, glycolipids, colominic acid and synthetic substrates.. Inhibited by the neuraminidase inhibitors zanamivir (Relenza) and oseltamivir (Tamiflu). These drugs interfere with the release of progeny virus from infected cells and are effective against all influenza strains. Resistance to neuraminidase inhibitors is quite rare. Functionally, catalyzes the removal of terminal sialic acid residues from viral and cellular glycoconjugates. Cleaves off the terminal sialic acids on the glycosylated HA during virus budding to facilitate virus release. Additionally helps virus spread through the circulation by further removing sialic acids from the cell surface. These cleavages prevent self-aggregation and ensure the efficient spread of the progeny virus from cell to cell. Otherwise, infection would be limited to one round of replication. Described as a receptor-destroying enzyme because it cleaves a terminal sialic acid from the cellular receptors. May facilitate viral invasion of the upper airways by cleaving the sialic acid moieties on the mucin of the airway epithelial cells. Likely to plays a role in the budding process through its association with lipid rafts during intracellular transport. May additionally display a raft-association independent effect on budding. Plays a role in the determination of host range restriction on replication and virulence. Sialidase activity in late endosome/lysosome traffic seems to enhance virus replication. This chain is Neuraminidase, found in Influenza A virus (strain A/RI/5-/1957 H2N2).